The sequence spans 192 residues: Lipid A acyltransferase PagP (192 aa).

The N-terminal stretch at 1–26 (MTVVNKSFLTFLVFFCQILFPLNASA) is a signal peptide. Catalysis depends on residues His-64, Asp-107, and Ser-108.

Belongs to the lipid A palmitoyltransferase family. As to quaternary structure, homodimer.

It localises to the cell outer membrane. It carries out the reaction a lipid A + a 1,2-diacyl-sn-glycero-3-phosphocholine = a hepta-acyl lipid A + a 2-acyl-sn-glycero-3-phosphocholine. It catalyses the reaction a lipid IVA + a 1,2-diacyl-sn-glycero-3-phosphocholine = a lipid IVB + a 2-acyl-sn-glycero-3-phosphocholine. The enzyme catalyses a lipid IIA + a 1,2-diacyl-sn-glycero-3-phosphocholine = a lipid IIB + a 2-acyl-sn-glycero-3-phosphocholine. Its function is as follows. Transfers a fatty acid residue from the sn-1 position of a phospholipid to the N-linked hydroxyfatty acid chain on the proximal unit of lipid A or its precursors. In Cronobacter turicensis (strain DSM 18703 / CCUG 55852 / LMG 23827 / z3032), this protein is Lipid A acyltransferase PagP.